A 998-amino-acid chain; its full sequence is MTTDVAPGTMENETSKVMSLKHKAAYVPPPIPHVEMNQLPLSLLLRNLTVFTAKEISQFFKLNVHTGGKTPFEKKLELLNMILFLRNQFLKLYVLVKWAKTLKQNNFHSLIDLLNWFRNANMQVNNCTMALKQILGTMAGAKLPNPDLATSLEVLMLGRPNLPNHGFNLNGSQSDNLTIPNKLILKRLRDLNTCLSIKISLMTIPSQLAKYEIKDGRIVFTVKDEFELQLSTIDQNSPLFFVNINLLFNERLPLNLARLEKHINEILFKSTNPLCLVYQFLHKYILTLQMYMIHVELNALGLNGKYSGGHLVHNYDSKKQIITIKYWLQSKIANTCKCVVGMDKETESIVLEWQNPDVNKETVTTRYHGLLNNIESIIDEITFNHAQMIRADLLRTDTFQEDNEDTTSTSLLFQIPTTCATVSQIQLKIDQVSGIFYFHNPSNLLLSYARQINQSSNTQDLITVLGRLKLDKVDSILRHMLDKTGWICSDVVRLKSSIVPSTDSTFSKDIFVKLKDWPSNWFLVLTIISSTNTCIVEKRIGKILSVKGVWKLKYMDKKNVITSKLDTMTYPKMLTLQISILNKIVNHMIIDSLNELKIKNKICTFTTEDSNILPPYIIRKDGKENTDNITVIALGLESFLEGSKALNTILESSMLLKIDYQKMDIELYGKFKTDNEMIRCQCDELSIKFLEEDSLSFFMSENFGNLNDIMLYLSKFRKKLTQLIALTDVMDTLHSNFQSMDFRVVELRPNEIRFKYLPMKDSPDNEDCVIRIVTNQEKVEKLDIKLSEHNPQAMIQRFLDEKEGFAHNFIFHYLQFTLPLFRASKEADYTSSSPSTVKMHLFMHSLQEFHFLYRNHKVGGELSFIIQLRSVVRTRHQENTQYFVRFAQDYSQPQLQQQHPLSKAIAEIQKNAFSLALLKEQNSNTTSSTTTAGTATAGATMISTASSNKLLDLQDSSPTNAAVDWSSIKCVRLGSALACSHDQILPLLLQFHKSISDC.

Belongs to the Mediator complex subunit 14 family. In terms of assembly, component of the Mediator complex.

It localises to the nucleus. Component of the Mediator complex, a coactivator involved in the regulated transcription of nearly all RNA polymerase II-dependent genes. Mediator functions as a bridge to convey information from gene-specific regulatory proteins to the basal RNA polymerase II transcription machinery. Mediator is recruited to promoters by direct interactions with regulatory proteins and serves as a scaffold for the assembly of a functional preinitiation complex with RNA polymerase II and the general transcription factors. The protein is Mediator of RNA polymerase II transcription subunit 14 (RGR1) of Kluyveromyces lactis (strain ATCC 8585 / CBS 2359 / DSM 70799 / NBRC 1267 / NRRL Y-1140 / WM37) (Yeast).